We begin with the raw amino-acid sequence, 173 residues long: Galactose-6-phosphate isomerase subunit LacB (173 aa).

The protein belongs to the LacAB/RpiB family. In terms of assembly, heteromultimeric protein consisting of LacA and LacB.

The catalysed reaction is aldehydo-D-galactose 6-phosphate = keto-D-tagatose 6-phosphate. Its pathway is carbohydrate metabolism; D-galactose 6-phosphate degradation; D-tagatose 6-phosphate from D-galactose 6-phosphate: step 1/1. The sequence is that of Galactose-6-phosphate isomerase subunit LacB from Clostridium acetobutylicum (strain ATCC 824 / DSM 792 / JCM 1419 / IAM 19013 / LMG 5710 / NBRC 13948 / NRRL B-527 / VKM B-1787 / 2291 / W).